Consider the following 444-residue polypeptide: Tubulin beta chain (444 aa).

The MREI motif signature appears at 1 to 4; that stretch reads MREI. Gln-11 serves as a coordination point for GTP. Ser-40 is modified (phosphoserine). At Thr-55 the chain carries Phosphothreonine. Lys-58 carries the N6-acetyllysine; alternate modification. The residue at position 58 (Lys-58) is an N6-succinyllysine; alternate. Lys-58 participates in a covalent cross-link: Glycyl lysine isopeptide (Lys-Gly) (interchain with G-Cter in ubiquitin); alternate. Residues Glu-69, Ser-138, Gly-142, Thr-143, and Gly-144 each contribute to the GTP site. A Mg(2+)-binding site is contributed by Glu-69. The residue at position 172 (Ser-172) is a Phosphoserine; by CDK1. Positions 204 and 226 each coordinate GTP. Residues Thr-285 and Thr-290 each carry the phosphothreonine modification. The residue at position 318 (Arg-318) is an Omega-N-methylarginine. Lys-324 participates in a covalent cross-link: Glycyl lysine isopeptide (Lys-Gly) (interchain with G-Cter in ubiquitin). Positions 423–444 are disordered; that stretch reads QQYQDATAEEEEDFGEEAEEEA. The segment covering 429–444 has biased composition (acidic residues); that stretch reads TAEEEEDFGEEAEEEA. Residues Glu-434, Glu-438, Glu-439, and Glu-441 each carry the 5-glutamyl polyglutamate modification. Residues Glu-438, Glu-439, Glu-441, Glu-442, and Glu-443 each carry the 5-glutamyl glycine modification.

The protein belongs to the tubulin family. In terms of assembly, heterodimer of alpha and beta chains. A typical microtubule is a hollow water-filled tube with an outer diameter of 25 nm and an inner diameter of 15 nM. Alpha-beta heterodimers associate head-to-tail to form protofilaments running lengthwise along the microtubule wall with the beta-tubulin subunit facing the microtubule plus end conferring a structural polarity. Microtubules usually have 13 protofilaments but different protofilament numbers can be found in some organisms and specialized cells. Interacts with CIMAP3. Interacts with DIAPH1. Interacts with MX1. May interact with RNABP10. Interacts with CFAP157. Nascent tubulin polypeptide interacts (via beta-tubulin MREI motif) with TTC5/STRAP; this interaction results in tubulin mRNA-targeted degradation. Requires Mg(2+) as cofactor. Post-translationally, some glutamate residues at the C-terminus are polyglycylated, resulting in polyglycine chains on the gamma-carboxyl group. Glycylation is mainly limited to tubulin incorporated into axonemes (cilia and flagella) whereas glutamylation is prevalent in neuronal cells, centrioles, axonemes, and the mitotic spindle. Both modifications can coexist on the same protein on adjacent residues, and lowering polyglycylation levels increases polyglutamylation, and reciprocally. Cilia and flagella glycylation is required for their stability and maintenance. Flagella glycylation controls sperm motility. Some glutamate residues at the C-terminus are polyglutamylated, resulting in polyglutamate chains on the gamma-carboxyl group. Polyglutamylation plays a key role in microtubule severing by spastin (SPAST). SPAST preferentially recognizes and acts on microtubules decorated with short polyglutamate tails: severing activity by SPAST increases as the number of glutamates per tubulin rises from one to eight, but decreases beyond this glutamylation threshold. Glutamylation is also involved in cilia motility. In terms of processing, phosphorylated on Ser-172 by CDK1 during the cell cycle, from metaphase to telophase, but not in interphase. This phosphorylation inhibits tubulin incorporation into microtubules.

The protein localises to the cytoplasm. Its subcellular location is the cytoskeleton. Its function is as follows. Tubulin is the major constituent of microtubules, a cylinder consisting of laterally associated linear protofilaments composed of alpha- and beta-tubulin heterodimers. Microtubules grow by the addition of GTP-tubulin dimers to the microtubule end, where a stabilizing cap forms. Below the cap, tubulin dimers are in GDP-bound state, owing to GTPase activity of alpha-tubulin. The polypeptide is Tubulin beta chain (TUBB) (Sus scrofa (Pig)).